A 327-amino-acid chain; its full sequence is Acetaldehyde dehydrogenase 5 (327 aa).

An NAD(+)-binding site is contributed by 15–18; sequence SGNI. The active-site Acyl-thioester intermediate is C133. NAD(+)-binding positions include 164-172 and N297; that span reads SAGPGTRAN.

The protein belongs to the acetaldehyde dehydrogenase family.

It carries out the reaction acetaldehyde + NAD(+) + CoA = acetyl-CoA + NADH + H(+). The chain is Acetaldehyde dehydrogenase 5 from Rhodococcus jostii (strain RHA1).